The chain runs to 601 residues: Elongation factor 4 (601 aa).

A tr-type G domain is found at 7 to 189; it reads KNIRNFSIVA…AIVTRLPPPM (183 aa). GTP is bound by residues 19 to 24 and 136 to 139; these read DHGKST and NKVD.

Belongs to the TRAFAC class translation factor GTPase superfamily. Classic translation factor GTPase family. LepA subfamily.

It localises to the cell inner membrane. The catalysed reaction is GTP + H2O = GDP + phosphate + H(+). Its function is as follows. Required for accurate and efficient protein synthesis under certain stress conditions. May act as a fidelity factor of the translation reaction, by catalyzing a one-codon backward translocation of tRNAs on improperly translocated ribosomes. Back-translocation proceeds from a post-translocation (POST) complex to a pre-translocation (PRE) complex, thus giving elongation factor G a second chance to translocate the tRNAs correctly. Binds to ribosomes in a GTP-dependent manner. In Xanthobacter autotrophicus (strain ATCC BAA-1158 / Py2), this protein is Elongation factor 4.